The sequence spans 366 residues: Galactoside alpha-(1,2)-fucosyltransferase 1 (366 aa).

The Cytoplasmic portion of the chain corresponds to 1–8; sequence MWPLSHRH. The helical; Signal-anchor for type II membrane protein transmembrane segment at 9–25 threads the bilayer; sequence LCLAFLLVCVLSAISFF. Residues 26 to 366 lie on the Lumenal side of the membrane; sequence LHVHQDSFRH…LSPLWTLAEP (341 aa). Residues asparagine 66, asparagine 302, and asparagine 328 are each glycosylated (N-linked (GlcNAc...) asparagine).

This sequence belongs to the glycosyltransferase 11 family.

It is found in the golgi apparatus. It localises to the golgi stack membrane. It carries out the reaction a beta-D-galactosyl-(1-&gt;4)-N-acetyl-beta-D-glucosaminyl derivative + GDP-beta-L-fucose = an alpha-L-Fuc-(1-&gt;2)-beta-D-Gal-(1-&gt;4)-beta-D-GlcNAc derivative + GDP + H(+). The catalysed reaction is a ganglioside GA1 + GDP-beta-L-fucose = a ganglioside Fuc-GA1 + GDP + H(+). The enzyme catalyses a beta-D-Gal-(1-&gt;3)-beta-D-GlcNAc-(1-&gt;3)-beta-D-Gal-(1-&gt;4)-beta-D-Glc-(1&lt;-&gt;1')-Cer(d18:1(4E)) + GDP-beta-L-fucose = alpha-L-fucosyl-(1-&gt;2)- beta-D-galactosyl-(1-&gt;3)-N-acetyl-beta-D-glucosaminyl-(1-&gt;3)-beta-D-galactosyl-(1-&gt;4)-beta-D-glucosyl-(1&lt;-&gt;1')-N-acylsphing-4-enine + GDP + H(+). It catalyses the reaction a neolactoside nLc4Cer(d18:1(4E)) + GDP-beta-L-fucose = a neolactoside IV(2)-alpha-Fuc-nLc4Cer(d18:1(4E)) + GDP + H(+). It carries out the reaction a ganglioside GM1 + GDP-beta-L-fucose = a ganglioside Fuc-GM1 + GDP + H(+). The catalysed reaction is beta-D-galactosyl-(1-&gt;3)-N-acetyl-D-galactosamine + GDP-beta-L-fucose = alpha-L-fucosyl-(1-&gt;2)-beta-D-galactosyl-(1-&gt;3)-N-acetyl-D-galactosamine + GDP + H(+). It functions in the pathway protein modification; protein glycosylation. In terms of biological role, catalyzes the transfer of L-fucose, from a guanosine diphosphate-beta-L-fucose, to the terminal galactose residue of glycoconjugates through an alpha(1,2) linkage leading to H antigen synthesis that is an intermediate substrate in the synthesis of ABO blood group antigens. H antigen is essential for maturation of the glomerular layer of the main olfactory bulb, in cell migration and early cell-cell contacts during tumor associated angiogenesis. Preferentially fucosylates soluble lactose and to a lesser extent fucosylates glycolipids gangliosides GA1 and GM1a. The polypeptide is Galactoside alpha-(1,2)-fucosyltransferase 1 (Alouatta belzebul (Red-handed howler monkey)).